The primary structure comprises 487 residues: Photosystem II CP43 reaction center protein (487 aa).

A propeptide spanning residues 1-28 is cleaved from the precursor; sequence MKVFVLGWLLKINLMKTLYSQRRFYHVE. 5 helical membrane passes run 83–107, 148–169, 192–214, 269–289, and 305–326; these read LFEV…PHLA, LIGP…RDKN, KSLF…RFVS, KPFA…LSYS, and WYNN…ASQA. A [CaMn4O5] cluster-binding site is contributed by glutamate 381. A helical membrane pass occupies residues 461-485; it reads RARAAAAGFEKGINRENEPVLSMRP.

The protein belongs to the PsbB/PsbC family. PsbC subfamily. PSII is composed of 1 copy each of membrane proteins PsbA, PsbB, PsbC, PsbD, PsbE, PsbF, PsbH, PsbI, PsbJ, PsbK, PsbL, PsbM, PsbT, PsbX, PsbY, PsbZ, Psb30/Ycf12, at least 3 peripheral proteins of the oxygen-evolving complex and a large number of cofactors. It forms dimeric complexes. Requires Binds multiple chlorophylls and provides some of the ligands for the Ca-4Mn-5O cluster of the oxygen-evolving complex. It may also provide a ligand for a Cl- that is required for oxygen evolution. PSII binds additional chlorophylls, carotenoids and specific lipids. as cofactor.

The protein localises to the plastid. It localises to the chloroplast thylakoid membrane. In terms of biological role, one of the components of the core complex of photosystem II (PSII). It binds chlorophyll and helps catalyze the primary light-induced photochemical processes of PSII. PSII is a light-driven water:plastoquinone oxidoreductase, using light energy to abstract electrons from H(2)O, generating O(2) and a proton gradient subsequently used for ATP formation. This Porphyra purpurea (Red seaweed) protein is Photosystem II CP43 reaction center protein.